The sequence spans 763 residues: Amine oxidase [copper-containing] 3 (763 aa).

Over 1 to 6 (MNQKTT) the chain is Cytoplasmic. The chain crosses the membrane as a helical; Signal-anchor for type II membrane protein span at residues 7 to 27 (LVLLALAVITIFALVCVLIAG). At 28 to 763 (RGGDGGEASQ…AFSHGGFFTN (736 aa)) the chain is on the extracellular side. An N-linked (GlcNAc...) asparagine glycan is attached at Asn137. Cys198 and Cys199 form a disulfide bridge. N-linked (GlcNAc...) asparagine glycans are attached at residues Asn232 and Asn294. Asp386 functions as the Proton acceptor in the catalytic mechanism. Cys404 and Cys430 are oxidised to a cystine. Tyr471 functions as the Schiff-base intermediate with substrate; via topaquinone in the catalytic mechanism. A 2',4',5'-topaquinone modification is found at Tyr471. Cu(2+) is bound by residues His520 and His522. Residues Asp529, Leu530, Asp531, and Glu572 each contribute to the Ca(2+) site. N-linked (GlcNAc...) asparagine glycosylation occurs at Asn618. Positions 641, 663, and 665 each coordinate Ca(2+). Asn666 is a glycosylation site (N-linked (GlcNAc...) asparagine). Ca(2+)-binding residues include Glu667, Asp673, and Leu674. His684 contacts Cu(2+). Cys734 and Cys741 form a disulfide bridge.

It belongs to the copper/topaquinone oxidase family. Homodimer; disulfide-linked. Probably forms heterodimers with AOC2. It depends on Cu(2+) as a cofactor. Ca(2+) is required as a cofactor. The cofactor is L-topaquinone. Post-translationally, topaquinone (TPQ) is generated by copper-dependent autoxidation of a specific tyrosyl residue. In terms of processing, N- and O-glycosylated.

It is found in the cell membrane. It catalyses the reaction methylamine + O2 + H2O = formaldehyde + H2O2 + NH4(+). It carries out the reaction benzylamine + O2 + H2O = benzaldehyde + H2O2 + NH4(+). The enzyme catalyses 2-phenylethylamine + O2 + H2O = 2-phenylacetaldehyde + H2O2 + NH4(+). Functionally, catalyzes the oxidative deamination of primary amines to the corresponding aldehydes with the concomitant production of hydrogen peroxide and ammonia. Has a preference for the primary monoamines methylamine and benzylamine. Could also act on 2-phenylethylamine but much less efficiently. At endothelial cells surface can also function as a cell adhesion protein that participates in lymphocyte extravasation and recirculation by mediating the binding of lymphocytes to peripheral lymph node vascular endothelial cells in an L-selectin-independent fashion. The protein is Amine oxidase [copper-containing] 3 of Bos taurus (Bovine).